A 227-amino-acid chain; its full sequence is Cytochrome c oxidase subunit 2 (227 aa).

The Mitochondrial intermembrane portion of the chain corresponds to Met-1–Ser-14. Residues Pro-15–Met-45 form a helical membrane-spanning segment. The Mitochondrial matrix portion of the chain corresponds to Leu-46–Gln-59. Residues Glu-60–Met-87 form a helical membrane-spanning segment. Residues Asp-88 to Leu-227 are Mitochondrial intermembrane-facing. The Cu cation site is built by His-161, Cys-196, Glu-198, Cys-200, His-204, and Met-207. Glu-198 is a binding site for Mg(2+).

It belongs to the cytochrome c oxidase subunit 2 family. In terms of assembly, component of the cytochrome c oxidase (complex IV, CIV), a multisubunit enzyme composed of 14 subunits. The complex is composed of a catalytic core of 3 subunits MT-CO1, MT-CO2 and MT-CO3, encoded in the mitochondrial DNA, and 11 supernumerary subunits COX4I, COX5A, COX5B, COX6A, COX6B, COX6C, COX7A, COX7B, COX7C, COX8 and NDUFA4, which are encoded in the nuclear genome. The complex exists as a monomer or a dimer and forms supercomplexes (SCs) in the inner mitochondrial membrane with NADH-ubiquinone oxidoreductase (complex I, CI) and ubiquinol-cytochrome c oxidoreductase (cytochrome b-c1 complex, complex III, CIII), resulting in different assemblies (supercomplex SCI(1)III(2)IV(1) and megacomplex MCI(2)III(2)IV(2)). Found in a complex with TMEM177, COA6, COX18, COX20, SCO1 and SCO2. Interacts with TMEM177 in a COX20-dependent manner. Interacts with COX20. Interacts with COX16. Cu cation is required as a cofactor.

The protein localises to the mitochondrion inner membrane. The enzyme catalyses 4 Fe(II)-[cytochrome c] + O2 + 8 H(+)(in) = 4 Fe(III)-[cytochrome c] + 2 H2O + 4 H(+)(out). Component of the cytochrome c oxidase, the last enzyme in the mitochondrial electron transport chain which drives oxidative phosphorylation. The respiratory chain contains 3 multisubunit complexes succinate dehydrogenase (complex II, CII), ubiquinol-cytochrome c oxidoreductase (cytochrome b-c1 complex, complex III, CIII) and cytochrome c oxidase (complex IV, CIV), that cooperate to transfer electrons derived from NADH and succinate to molecular oxygen, creating an electrochemical gradient over the inner membrane that drives transmembrane transport and the ATP synthase. Cytochrome c oxidase is the component of the respiratory chain that catalyzes the reduction of oxygen to water. Electrons originating from reduced cytochrome c in the intermembrane space (IMS) are transferred via the dinuclear copper A center (CU(A)) of subunit 2 and heme A of subunit 1 to the active site in subunit 1, a binuclear center (BNC) formed by heme A3 and copper B (CU(B)). The BNC reduces molecular oxygen to 2 water molecules using 4 electrons from cytochrome c in the IMS and 4 protons from the mitochondrial matrix. The sequence is that of Cytochrome c oxidase subunit 2 (MT-CO2) from Balaenoptera musculus (Blue whale).